Here is a 175-residue protein sequence, read N- to C-terminus: Large ribosomal subunit protein uL10 (175 aa).

Belongs to the universal ribosomal protein uL10 family. Part of the ribosomal stalk of the 50S ribosomal subunit. The N-terminus interacts with L11 and the large rRNA to form the base of the stalk. The C-terminus forms an elongated spine to which L12 dimers bind in a sequential fashion forming a multimeric L10(L12)X complex.

Functionally, forms part of the ribosomal stalk, playing a central role in the interaction of the ribosome with GTP-bound translation factors. The sequence is that of Large ribosomal subunit protein uL10 from Methylococcus capsulatus (strain ATCC 33009 / NCIMB 11132 / Bath).